The chain runs to 483 residues: Protein PLASTID TRANSCRIPTIONALLY ACTIVE 14 (483 aa).

The N-terminal 62 residues, 1–62 (MASSVSLQFL…TQPFPLFQSP (62 aa)), are a transit peptide targeting the chloroplast. The SET domain occupies 80 to 325 (YKIGYVRSVR…KGEEMTINYM (246 aa)). Tyr-324 contributes to the S-adenosyl-L-methionine binding site.

This sequence belongs to the class V-like SAM-binding methyltransferase superfamily. Component of the transcriptionally active chromosome (TAC) complexes. Interacts with PTAC12/HMR/PAP5 and PTAC7. Binds to SL1/MTERF3. As to expression, mostly expressed in leaves, flowers and seedlings, and, to a lower extent, in stems and roots.

The protein resides in the plastid. The protein localises to the chloroplast thylakoid. Essential for chloroplast development, especially for thylakoid formation. Involved in plastid gene expression, probably by maintaining plastid-encoded RNA polymerase (PEP) activity. This Arabidopsis thaliana (Mouse-ear cress) protein is Protein PLASTID TRANSCRIPTIONALLY ACTIVE 14.